The sequence spans 423 residues: Putative galacturan 1,4-alpha-galacturonidase C (423 aa).

Residues 1 to 20 (MQLRASVLLSFLGLASVGHA) form the signal peptide. Asn92, Asn98, Asn118, Asn156, Asn179, and Asn191 each carry an N-linked (GlcNAc...) asparagine glycan. 2 PbH1 repeats span residues 215 to 236 (ATNI…AIKP) and 238 to 258 (SYNI…AIGS). Residue Asp229 is the Proton donor of the active site. Cys231 and Cys248 are joined by a disulfide. 3 N-linked (GlcNAc...) asparagine glycosylation sites follow: Asn245, Asn344, and Asn362. Residues Cys379 and Cys385 are joined by a disulfide bond. Asn400 carries an N-linked (GlcNAc...) asparagine glycan.

Belongs to the glycosyl hydrolase 28 family.

Its subcellular location is the secreted. It catalyses the reaction [(1-&gt;4)-alpha-D-galacturonosyl](n) + H2O = alpha-D-galacturonate + [(1-&gt;4)-alpha-D-galacturonosyl](n-1). Its function is as follows. Specific in hydrolyzing the terminal glycosidic bond of polygalacturonic acid and oligogalacturonates. This is Putative galacturan 1,4-alpha-galacturonidase C (rgxC) from Aspergillus niger (strain ATCC MYA-4892 / CBS 513.88 / FGSC A1513).